The sequence spans 189 residues: MAEKLHPRIDNGLPKESASFAGGTLVCACTSKPVKVKVKGQIAHNHACGCTKCWKPEGAIFSVVAVAGTGDVTVTENGDKLKVVDASALIQRHACTGCGVHMHGPVERDHAFKGLTFIHPERFVEDGWSPPGFTAFVSSIIESGVDPKRMDGIRAQLRTIGLEPYDCLNPGLMDYIATWTAKKSGALPA.

The region spanning 20-166 (FAGGTLVCAC…LRTIGLEPYD (147 aa)) is the CENP-V/GFA domain. Zn(2+) is bound by residues cysteine 27, cysteine 29, cysteine 48, cysteine 50, cysteine 53, cysteine 95, and cysteine 98.

The protein belongs to the Gfa family. The cofactor is Zn(2+).

It catalyses the reaction S-(hydroxymethyl)glutathione = glutathione + formaldehyde. Its pathway is one-carbon metabolism; formaldehyde degradation; formate from formaldehyde (glutathione route): step 1/3. Functionally, catalyzes the condensation of formaldehyde and glutathione to S-hydroxymethylglutathione. In Mesorhizobium japonicum (strain LMG 29417 / CECT 9101 / MAFF 303099) (Mesorhizobium loti (strain MAFF 303099)), this protein is Glutathione-dependent formaldehyde-activating enzyme.